The chain runs to 182 residues: Orotate phosphoribosyltransferase (182 aa).

5-phospho-alpha-D-ribose 1-diphosphate-binding positions include R91, K92, K95, H97, and 117–125; that span reads EDVTTTGGS. T121 and R149 together coordinate orotate.

Belongs to the purine/pyrimidine phosphoribosyltransferase family. PyrE subfamily. In terms of assembly, homodimer. Requires Mg(2+) as cofactor.

It carries out the reaction orotidine 5'-phosphate + diphosphate = orotate + 5-phospho-alpha-D-ribose 1-diphosphate. Its pathway is pyrimidine metabolism; UMP biosynthesis via de novo pathway; UMP from orotate: step 1/2. In terms of biological role, catalyzes the transfer of a ribosyl phosphate group from 5-phosphoribose 1-diphosphate to orotate, leading to the formation of orotidine monophosphate (OMP). The polypeptide is Orotate phosphoribosyltransferase (Pyrococcus abyssi (strain GE5 / Orsay)).